The following is a 241-amino-acid chain: Ubiquinone biosynthesis O-methyltransferase (241 aa).

S-adenosyl-L-methionine-binding residues include Arg-46, Gly-66, Asp-87, and Met-131.

It belongs to the methyltransferase superfamily. UbiG/COQ3 family.

The enzyme catalyses a 3-demethylubiquinol + S-adenosyl-L-methionine = a ubiquinol + S-adenosyl-L-homocysteine + H(+). It catalyses the reaction a 3-(all-trans-polyprenyl)benzene-1,2-diol + S-adenosyl-L-methionine = a 2-methoxy-6-(all-trans-polyprenyl)phenol + S-adenosyl-L-homocysteine + H(+). It participates in cofactor biosynthesis; ubiquinone biosynthesis. O-methyltransferase that catalyzes the 2 O-methylation steps in the ubiquinone biosynthetic pathway. The chain is Ubiquinone biosynthesis O-methyltransferase from Bordetella avium (strain 197N).